Consider the following 501-residue polypeptide: Lysine--tRNA ligase (501 aa).

Mg(2+) contacts are provided by glutamate 404 and glutamate 411.

This sequence belongs to the class-II aminoacyl-tRNA synthetase family. Homodimer. Mg(2+) serves as cofactor.

The protein resides in the cytoplasm. The enzyme catalyses tRNA(Lys) + L-lysine + ATP = L-lysyl-tRNA(Lys) + AMP + diphosphate. This is Lysine--tRNA ligase (lysS) from Campylobacter jejuni subsp. jejuni serotype O:2 (strain ATCC 700819 / NCTC 11168).